The chain runs to 186 residues: Astacin-like metalloprotease toxin 5 (186 aa).

The region spanning 1–186 is the Peptidase M12A domain; the sequence is NAVKYDQQLW…CHSKRKAELL (186 aa). Cystine bridges form between C42–C177 and C63–C84. H92 contributes to the Zn(2+) binding site. The active site involves E93. Residues H96 and H102 each coordinate Zn(2+). A glycan (N-linked (GlcNAc...) asparagine) is linked at N122.

Monomer. The cofactor is Zn(2+). In terms of tissue distribution, expressed by the venom gland.

The protein resides in the secreted. With respect to regulation, inhibited by 1,10-phenanthroline. In terms of biological role, zinc metalloprotease. Provoques deadhesion of endothelial cells from cell cultures, and also degradation of fibronectin, fibrinogen and gelatin in vitro. Its role in the venom is not fully understood but it might act as a spreading factor that facilitates diffusion of other venom toxins. Alternatively, it might be involved in the proteolytic processing of other venom toxins or it might play a role in extra-oral digestion of prey. The sequence is that of Astacin-like metalloprotease toxin 5 from Loxosceles gaucho (Spider).